We begin with the raw amino-acid sequence, 398 residues long: Metalloprotease MmpA (398 aa).

Residue histidine 22 participates in Zn(2+) binding. The active site involves glutamate 23. Histidine 26 is a binding site for Zn(2+). The next 3 helical transmembrane spans lie at 117-139 (FIAVAGPMANFILAILVFAVILV), 316-338 (QFWLIASLSVSIGFMNLLPIPVL), and 362-381 (AAGFRAGLALILGFMLFAAW). Residues 130–203 (AILVFAVILV…MPIDFAVERD (74 aa)) enclose the PDZ domain.

It belongs to the peptidase M50B family. Requires Zn(2+) as cofactor.

The protein localises to the cell inner membrane. Functionally, involved in the regulated intramembrane proteolysis (RIP) of the short isoform of PodJ protein (PodJS), during the swarmer-to-stalked transition. The cleavage occurs near or within the single transmembrane of PodJS thereby releasing the N-terminal segment into the cytoplasm for subsequent degradation. It contributes to preserve asymmetry in the next cell cycle through sequential degradation. The polypeptide is Metalloprotease MmpA (mmpA) (Caulobacter vibrioides (strain ATCC 19089 / CIP 103742 / CB 15) (Caulobacter crescentus)).